The following is a 1096-amino-acid chain: Serine/threonine-protein kinase mig-15 (1096 aa).

One can recognise a Protein kinase domain in the interval 21–288; sequence FELIEVVGNG…TGALLRHPFI (268 aa). Residues 27-35 and lysine 50 contribute to the ATP site; that span reads VGNGTYGQV. Catalysis depends on aspartate 151, which acts as the Proton acceptor. Residues 293 to 315 are compositionally biased toward basic and acidic residues; sequence HEQTIRHSIKEHIDRNRRVKKDD. Disordered regions lie at residues 293–351, 380–492, 517–545, and 574–664; these read HEQT…MIPM, LPQQ…QQSR, KMGG…EASI, and NGEG…DLLP. Over residues 316–328 the composition is skewed to acidic residues; it reads ADYEYSGSEDDEP. A compositionally biased stretch (low complexity) spans 380-393; it reads LPQQPAPAPFQYQQ. Composition is skewed to basic and acidic residues over residues 397–408 and 453–472; these read VEPRRESSEVKL and NYEK…ERQA. Residues 532-541 show a composition bias toward pro residues; it reads SPPPPAPPPR. Over residues 629–642 the composition is skewed to acidic residues; it reads LDDDDSDSDNEEGN. The 293-residue stretch at 778 to 1070 folds into the CNH domain; the sequence is SGEILCAALW…KFLCERNDKV (293 aa).

This sequence belongs to the protein kinase superfamily. STE Ser/Thr protein kinase family. STE20 subfamily.

The enzyme catalyses L-seryl-[protein] + ATP = O-phospho-L-seryl-[protein] + ADP + H(+). The catalysed reaction is L-threonyl-[protein] + ATP = O-phospho-L-threonyl-[protein] + ADP + H(+). Involved in cell migration and signal transduction. Important in several developmental processes including epidermal development, Q neuroblast migrations and muscle arm targeting. Required with ina-1/pat-3 to stabilize the commissural axons growth cone along a precise direction and are required for the cell to respond appropriately when signaling in the growth cone must change. During gonad morphogenesis, involved in distal tip cell (DTC) migration from the dorsal side of the hermaphrodite body to the midbody to allow for formation of gonad arms. The chain is Serine/threonine-protein kinase mig-15 (mig-15) from Caenorhabditis elegans.